Reading from the N-terminus, the 360-residue chain is Hydroxycarboxylic acid receptor 2 (360 aa).

Residues 1–30 (MSKQNHFLVINGKNCCVFRDENIAKVLPPV) are Extracellular-facing. A helical transmembrane segment spans residues 31 to 51 (LGLEFVFGLLGNGLALWIFCF). Residues 52–60 (HLKSWKSSR) lie on the Cytoplasmic side of the membrane. The chain crosses the membrane as a helical span at residues 61–81 (IFLFNLAVADFLLIICLPFLT). Over 82-98 (DNYVQNWDWRFGSIPCR) the chain is Extracellular. An intrachain disulfide couples Cys-97 to Cys-174. Residues 99-119 (VMLFMLAMNRQGSIIFLTVVA) traverse the membrane as a helical segment. Topologically, residues 120 to 140 (VDRYFRVVHPHHFLNKISNRT) are cytoplasmic. A helical transmembrane segment spans residues 141–161 (AAIISCFLWGITIGLTVHLLY). Residues 162–189 (TDMMTRNGDANLCSSFSICYTFRWHDAM) lie on the Extracellular side of the membrane. Residues 190–210 (FLLEFFLPLGIILFCSGRIIW) form a helical membrane-spanning segment. The Cytoplasmic portion of the chain corresponds to 211-226 (SLRQRQMDRHVKIKRA). The chain crosses the membrane as a helical span at residues 227-247 (INFIMVVAIVFVICFLPSVAV). At 248 to 270 (RIRIFWLLYKHNVRNCDIYSSVD) the chain is on the extracellular side. The chain crosses the membrane as a helical span at residues 271–291 (LAFFTTLSFTYMNSMLDPVVY). At 292-360 (YFSSPSFPNF…SPPYLASTSR (69 aa)) the chain is on the cytoplasmic side. The interval 320–360 (NNRSTSVELTGDPSTIRSIPGALMTDPSEPGSPPYLASTSR) is disordered. Over residues 321-336 (NRSTSVELTGDPSTIR) the composition is skewed to polar residues. A Phosphoserine modification is found at Ser-325.

Belongs to the G-protein coupled receptor 1 family. In terms of tissue distribution, expressed in adipose tissue, lung and spleen.

The protein resides in the cell membrane. Acts as a high affinity receptor for both nicotinic acid (also known as niacin) and (D)-beta-hydroxybutyrate and mediates increased adiponectin secretion and decreased lipolysis through G(i)-protein-mediated inhibition of adenylyl cyclase. This pharmacological effect requires nicotinic acid doses that are much higher than those provided by a normal diet. Mediates nicotinic acid-induced apoptosis in mature neutrophils. Receptor activation by nicotinic acid results in reduced cAMP levels which may affect activity of cAMP-dependent protein kinase A and phosphorylation of target proteins, leading to neutrophil apoptosis. The rank order of potency for the displacement of nicotinic acid binding is 5-methyl pyrazole-3-carboxylic acid = pyridine-3-acetic acid &gt; acifran &gt; 5-methyl nicotinic acid = acipimox &gt;&gt; nicotinuric acid = nicotinamide. The polypeptide is Hydroxycarboxylic acid receptor 2 (Hcar2) (Rattus norvegicus (Rat)).